The chain runs to 229 residues: Rhamnosyl O-methyltransferase (229 aa).

Positions methionine 1–alanine 23 are cleaved as a signal peptide.

The protein belongs to the rhamnosyl O-methyltransferase family.

Its function is as follows. Catalyzes the O-methylation of the hydroxyl group located on C-2 of the first rhamnosyl residue linked to the phenolic group of glycosylated phenolphthiocerol dimycocerosates (PGL) and p-hydroxybenzoic acid derivatives (p-HBAD). In Mycobacterium leprae (strain TN), this protein is Rhamnosyl O-methyltransferase.